Reading from the N-terminus, the 29-residue chain is NADP phosphatase 1 (29 aa).

Homodimer.

It localises to the cytoplasm. This Arthrobacter sp. (strain KM) protein is NADP phosphatase 1.